The primary structure comprises 178 residues: Large ribosomal subunit protein uL6 (178 aa).

It belongs to the universal ribosomal protein uL6 family. In terms of assembly, part of the 50S ribosomal subunit.

In terms of biological role, this protein binds to the 23S rRNA, and is important in its secondary structure. It is located near the subunit interface in the base of the L7/L12 stalk, and near the tRNA binding site of the peptidyltransferase center. In Listeria innocua serovar 6a (strain ATCC BAA-680 / CLIP 11262), this protein is Large ribosomal subunit protein uL6.